Consider the following 96-residue polypeptide: UPF0235 protein YggU (96 aa).

This sequence belongs to the UPF0235 family.

The protein is UPF0235 protein YggU of Salmonella arizonae (strain ATCC BAA-731 / CDC346-86 / RSK2980).